The primary structure comprises 197 residues: Recombination protein RecR (197 aa).

The segment at 57 to 72 (CSVCFGITEDDPCHLC) adopts a C4-type zinc-finger fold. Residues 79-174 (TTICVVEEPQ…RVTRLAHGIP (96 aa)) enclose the Toprim domain.

Belongs to the RecR family.

In terms of biological role, may play a role in DNA repair. It seems to be involved in an RecBC-independent recombinational process of DNA repair. It may act with RecF and RecO. This chain is Recombination protein RecR, found in Geotalea daltonii (strain DSM 22248 / JCM 15807 / FRC-32) (Geobacter daltonii).